The sequence spans 303 residues: Putative S-adenosyl-L-methionine-dependent methyltransferase MAP_4197c (303 aa).

S-adenosyl-L-methionine is bound by residues Asp-129 and 158–159 (DL).

It belongs to the UPF0677 family.

Its function is as follows. Exhibits S-adenosyl-L-methionine-dependent methyltransferase activity. The polypeptide is Putative S-adenosyl-L-methionine-dependent methyltransferase MAP_4197c (Mycolicibacterium paratuberculosis (strain ATCC BAA-968 / K-10) (Mycobacterium paratuberculosis)).